A 370-amino-acid polypeptide reads, in one-letter code: Putative agmatine deiminase (370 aa).

The active-site Amidino-cysteine intermediate is Cys-361.

The protein belongs to the agmatine deiminase family.

It carries out the reaction agmatine + H2O = N-carbamoylputrescine + NH4(+). The protein is Putative agmatine deiminase of Shewanella sp. (strain MR-4).